The chain runs to 61 residues: Probable tautomerase stu1128 (61 aa).

P2 functions as the Proton acceptor; via imino nitrogen in the catalytic mechanism.

It belongs to the 4-oxalocrotonate tautomerase family.

The chain is Probable tautomerase stu1128 from Streptococcus thermophilus (strain ATCC BAA-250 / LMG 18311).